A 421-amino-acid chain; its full sequence is 4-hydroxy-3-methylbut-2-en-1-yl diphosphate synthase (flavodoxin) (421 aa).

Cys311, Cys314, Cys357, and Glu364 together coordinate [4Fe-4S] cluster.

The protein belongs to the IspG family. [4Fe-4S] cluster is required as a cofactor.

The catalysed reaction is (2E)-4-hydroxy-3-methylbut-2-enyl diphosphate + oxidized [flavodoxin] + H2O + 2 H(+) = 2-C-methyl-D-erythritol 2,4-cyclic diphosphate + reduced [flavodoxin]. Its pathway is isoprenoid biosynthesis; isopentenyl diphosphate biosynthesis via DXP pathway; isopentenyl diphosphate from 1-deoxy-D-xylulose 5-phosphate: step 5/6. Its function is as follows. Converts 2C-methyl-D-erythritol 2,4-cyclodiphosphate (ME-2,4cPP) into 1-hydroxy-2-methyl-2-(E)-butenyl 4-diphosphate. This is 4-hydroxy-3-methylbut-2-en-1-yl diphosphate synthase (flavodoxin) from Stenotrophomonas maltophilia (strain K279a).